Consider the following 387-residue polypeptide: Bifunctional chorismate mutase/prephenate dehydratase (387 aa).

Residues 1–92 enclose the Chorismate mutase domain; it reads MNPDNPLLAL…DSVLTQQALL (92 aa). Arg-11, Arg-28, Lys-39, Asp-48, Glu-52, Ser-84, and Gln-88 together coordinate substrate. The Prephenate dehydratase domain occupies 105–285; it reads RIAFLGPKGS…NHTRFIVLAR (181 aa). The ACT domain occupies 299-376; that stretch reads TLIMATGQQA…RSLKVLGCYP (78 aa).

It localises to the cytoplasm. The enzyme catalyses chorismate = prephenate. It catalyses the reaction prephenate + H(+) = 3-phenylpyruvate + CO2 + H2O. Its pathway is amino-acid biosynthesis; L-phenylalanine biosynthesis; phenylpyruvate from prephenate: step 1/1. The protein operates within metabolic intermediate biosynthesis; prephenate biosynthesis; prephenate from chorismate: step 1/1. Its function is as follows. Catalyzes the Claisen rearrangement of chorismate to prephenate and the decarboxylation/dehydration of prephenate to phenylpyruvate. The protein is Bifunctional chorismate mutase/prephenate dehydratase (pheA) of Enterobacter agglomerans (Erwinia herbicola).